The chain runs to 934 residues: Protein translocase subunit SecA (934 aa).

ATP-binding positions include Q87, 105-109, and D515; that span reads GEGKT. Zn(2+) contacts are provided by C918, C920, C929, and H930.

The protein belongs to the SecA family. As to quaternary structure, monomer and homodimer. Part of the essential Sec protein translocation apparatus which comprises SecA, SecYEG and auxiliary proteins SecDF-YajC and YidC. Requires Zn(2+) as cofactor.

The protein resides in the cell inner membrane. It localises to the cytoplasm. The enzyme catalyses ATP + H2O + cellular proteinSide 1 = ADP + phosphate + cellular proteinSide 2.. In terms of biological role, part of the Sec protein translocase complex. Interacts with the SecYEG preprotein conducting channel. Has a central role in coupling the hydrolysis of ATP to the transfer of proteins into and across the cell membrane, serving both as a receptor for the preprotein-SecB complex and as an ATP-driven molecular motor driving the stepwise translocation of polypeptide chains across the membrane. The chain is Protein translocase subunit SecA from Ralstonia pickettii (strain 12J).